The following is a 232-amino-acid chain: Phosphatidylserine decarboxylase proenzyme (232 aa).

Ser-190 (schiff-base intermediate with substrate; via pyruvic acid) is an active-site residue. The residue at position 190 (Ser-190) is a Pyruvic acid (Ser); by autocatalysis.

The protein belongs to the phosphatidylserine decarboxylase family. PSD-A subfamily. In terms of assembly, heterodimer of a large membrane-associated beta subunit and a small pyruvoyl-containing alpha subunit. The cofactor is pyruvate. Is synthesized initially as an inactive proenzyme. Formation of the active enzyme involves a self-maturation process in which the active site pyruvoyl group is generated from an internal serine residue via an autocatalytic post-translational modification. Two non-identical subunits are generated from the proenzyme in this reaction, and the pyruvate is formed at the N-terminus of the alpha chain, which is derived from the carboxyl end of the proenzyme. The post-translation cleavage follows an unusual pathway, termed non-hydrolytic serinolysis, in which the side chain hydroxyl group of the serine supplies its oxygen atom to form the C-terminus of the beta chain, while the remainder of the serine residue undergoes an oxidative deamination to produce ammonia and the pyruvoyl prosthetic group on the alpha chain.

Its subcellular location is the cell membrane. The enzyme catalyses a 1,2-diacyl-sn-glycero-3-phospho-L-serine + H(+) = a 1,2-diacyl-sn-glycero-3-phosphoethanolamine + CO2. Its pathway is phospholipid metabolism; phosphatidylethanolamine biosynthesis; phosphatidylethanolamine from CDP-diacylglycerol: step 2/2. Its function is as follows. Catalyzes the formation of phosphatidylethanolamine (PtdEtn) from phosphatidylserine (PtdSer). The sequence is that of Phosphatidylserine decarboxylase proenzyme from Rhodopseudomonas palustris (strain ATCC BAA-98 / CGA009).